The chain runs to 217 residues: Pyrophosphatase PpaX (217 aa).

Catalysis depends on Asp-11, which acts as the Nucleophile.

This sequence belongs to the HAD-like hydrolase superfamily. PpaX family. It depends on Mg(2+) as a cofactor.

It carries out the reaction diphosphate + H2O = 2 phosphate + H(+). In terms of biological role, hydrolyzes pyrophosphate formed during P-Ser-HPr dephosphorylation by HPrK/P. Might play a role in controlling the intracellular pyrophosphate pool. This chain is Pyrophosphatase PpaX, found in Listeria monocytogenes serotype 4b (strain CLIP80459).